The sequence spans 346 residues: Olfactory receptor 8G5 (346 aa).

The Extracellular portion of the chain corresponds to Met1–Leu60. Residues Asn16 and Asn40 are each glycosylated (N-linked (GlcNAc...) asparagine). Residues Pro61–Ile81 form a helical membrane-spanning segment. At Thr82–His89 the chain is on the cytoplasmic side. Residues Leu90–Thr110 traverse the membrane as a helical segment. Topologically, residues Val111–Thr134 are extracellular. Cys132 and Cys214 are joined by a disulfide. A helical membrane pass occupies residues Gln135 to Tyr155. Over Asp156–Lys174 the chain is Cytoplasmic. The chain crosses the membrane as a helical span at residues Ala175 to Ile195. The Extracellular segment spans residues Gly196–Leu232. A helical membrane pass occupies residues Leu233 to Ser252. The Cytoplasmic segment spans residues Tyr253 to Ala272. Residues Phe273–Met293 traverse the membrane as a helical segment. Residues Tyr294 to Gly306 are Extracellular-facing. The chain crosses the membrane as a helical span at residues Lys307–Leu327. Over Arg328–Leu346 the chain is Cytoplasmic.

It belongs to the G-protein coupled receptor 1 family.

The protein localises to the cell membrane. Its function is as follows. Odorant receptor. This Homo sapiens (Human) protein is Olfactory receptor 8G5 (OR8G5).